The primary structure comprises 380 residues: O-phospho-L-seryl-tRNA:Cys-tRNA synthase (380 aa).

Residues A86–R87, N192, and S215–H217 each bind pyridoxal 5'-phosphate. N6-(pyridoxal phosphate)lysine is present on K218.

Belongs to the SepCysS family. As to quaternary structure, homodimer. Interacts with SepRS. The cofactor is pyridoxal 5'-phosphate.

It catalyses the reaction O-phospho-L-seryl-tRNA(Cys) + hydrogen sulfide + H(+) = L-cysteinyl-tRNA(Cys) + phosphate. Its function is as follows. Converts O-phospho-L-seryl-tRNA(Cys) (Sep-tRNA(Cys)) to L-cysteinyl-tRNA(Cys) (Cys-tRNA(Cys)). This Methanococcus maripaludis (strain C7 / ATCC BAA-1331) protein is O-phospho-L-seryl-tRNA:Cys-tRNA synthase.